Reading from the N-terminus, the 1406-residue chain is DNA topoisomerase 2 (1406 aa).

ATP contacts are provided by residues Asn-69, Asn-98, 126–128 (SSN), and 139–146 (GRNGYGAK). Residues 332-334 (KKK) are interaction with DNA. 363-365 (QTK) contributes to the ATP binding site. One can recognise a Toprim domain in the interval 441-555 (CTLILTEGDS…GLLDIPGFLI (115 aa)). Residues Glu-447, Asp-524, and Asp-526 each contribute to the Mg(2+) site. The 470-residue stretch at 690–1159 (IPSVLDGFKP…SAKDLWNNDL (470 aa)) folds into the Topo IIA-type catalytic domain. Tyr-780 acts as the O-(5'-phospho-DNA)-tyrosine intermediate in catalysis. Residues 963-972 (KLISPISLQN) form an interaction with DNA region. Residues 1079 to 1089 (EDEDEDLEESE) are compositionally biased toward acidic residues. Disordered stretches follow at residues 1079-1106 (EDEDEDLEESEEATRKKDKDDESTVNGP), 1183-1215 (KTKGGKRKRKGGDDDDYDPSGKKKPARRIKKIK), 1230-1287 (KIKA…DESG), and 1303-1406 (DEDA…FNDE). Positions 1090–1100 (EATRKKDKDDE) are enriched in basic and acidic residues. The span at 1204 to 1214 (KKKPARRIKKI) shows a compositional bias: basic residues. Residues 1261–1274 (DVTSNASTPSTTIF) are compositionally biased toward polar residues. Over residues 1326–1336 (AKKKAPPKRKA) the composition is skewed to basic residues. Acidic residues-rich tracts occupy residues 1341 to 1359 (SSEDELSDANLSEQDDEEV) and 1381 to 1406 (EISDEEDFIDDDEDEEVDSDESFNDE).

Belongs to the type II topoisomerase family. In terms of assembly, homodimer. It depends on Mg(2+) as a cofactor. Mn(2+) is required as a cofactor. The cofactor is Ca(2+).

The protein localises to the nucleus. The catalysed reaction is ATP-dependent breakage, passage and rejoining of double-stranded DNA.. Control of topological states of DNA by transient breakage and subsequent rejoining of DNA strands. Topoisomerase II makes double-strand breaks. This chain is DNA topoisomerase 2 (TOP2), found in Candida glabrata (strain ATCC 2001 / BCRC 20586 / JCM 3761 / NBRC 0622 / NRRL Y-65 / CBS 138) (Yeast).